The following is a 314-amino-acid chain: Serine/threonine-protein phosphatase CPPED1 (314 aa).

The residue at position 2 (Ser-2) is a Phosphoserine. Positions 47–250 (KAWSTGDCDN…KVVFSGHYHR (204 aa)) are catalytic. 4 residues coordinate a divalent metal cation: Asp-53, Asp-90, Asn-127, and His-247. Ser-294 is modified (phosphoserine).

Belongs to the metallophosphoesterase superfamily. CPPED1 family. It depends on a divalent metal cation as a cofactor. As to expression, expressed in subcutaneous adipose tissue.

The protein resides in the cytoplasm. It carries out the reaction O-phospho-L-seryl-[protein] + H2O = L-seryl-[protein] + phosphate. The enzyme catalyses O-phospho-L-threonyl-[protein] + H2O = L-threonyl-[protein] + phosphate. Its function is as follows. Protein phosphatase that dephosphorylates AKT family kinase specifically at 'Ser-473', blocking cell cycle progression and promoting cell apoptosis. May play an inhibitory role in glucose uptake by adipocytes. This is Serine/threonine-protein phosphatase CPPED1 (CPPED1) from Homo sapiens (Human).